The following is a 312-amino-acid chain: Pseudouridine-5'-phosphate glycosidase (312 aa).

Glu31 serves as the catalytic Proton donor. Lys93 and Val113 together coordinate substrate. A Mn(2+)-binding site is contributed by Asp145. Position 147-149 (147-149) interacts with substrate; the sequence is SAD. The Nucleophile role is filled by Lys166.

This sequence belongs to the pseudouridine-5'-phosphate glycosidase family. Homotrimer. Mn(2+) serves as cofactor. The cofactor is Fe(2+). It depends on Co(2+) as a cofactor.

It catalyses the reaction D-ribose 5-phosphate + uracil = psi-UMP + H2O. Its activity is regulated as follows. Inhibited by Zn(2+) and Ni(2+). In terms of biological role, catalyzes the reversible cleavage of pseudouridine 5'-phosphate (PsiMP) to ribose 5-phosphate and uracil. Functions biologically in the cleavage direction, as part of a pseudouridine degradation pathway. This Escherichia coli (strain K12) protein is Pseudouridine-5'-phosphate glycosidase.